The chain runs to 61 residues: Disintegrin atroxatin (61 aa).

Positions 1-61 (NPCCDAATCK…ADCPRKGIYG (61 aa)) constitute a Disintegrin domain. 5 disulfide bridges follow: cysteine 3–cysteine 26, cysteine 9–cysteine 23, cysteine 17–cysteine 23, cysteine 22–cysteine 47, and cysteine 35–cysteine 54. A Cell attachment site motif is present at residues 39 to 41 (RGD).

Belongs to the venom metalloproteinase (M12B) family. P-II subfamily. P-IIa sub-subfamily. In terms of assembly, monomer (disintegrin). Expressed by the venom gland.

It is found in the secreted. Functionally, inhibits fibrinogen interaction with platelets. Acts by binding to alpha-IIb/beta-3 (ITGA2B/ITGB3) on the platelet surface and inhibits aggregation induced by ADP, thrombin, platelet-activating factor and collagen. In Crotalus atrox (Western diamondback rattlesnake), this protein is Disintegrin atroxatin.